A 585-amino-acid polypeptide reads, in one-letter code: MNFDITRYPILSFAHSVRRLRLLSIEQLPQLCTELRKYLLDVVSITQGHFASGLGVIEITVALHYVYDTPFDNLLWDVGHQSYPHKILTGRAEKIGSIRKKNGLHPFPFREESKYDILSVGHSSTSISAGLGLSIAAGKEGKNRKTICVVGDGSMTAGMAFEAMNHAGIIQSDLLVVLNDNQMSISKNIGALNKHLKFLRDIKKSSKIFNFSIFESLNFKYLGPFDGHNIFKLIEIFKKTKDYRKTCLLHLITKKGKGYLPAELDPIKWHTISQSFSSSSKILTYSDVFGSWLCEIAEFDKKIMAITPAMCEGSGMLKFSRLFPNQYFDVAIAEQHAVTFAAGLAIAGYKPVVSIYSTFLQRAYDQIIHDVALQKLPVLFAIDRGGIVGHDGPTHQGIFDLSYLRCIPGIVIMTPSNENECRQMLYTGYMYKEGPSVVRYPKGKGIGMSLSPMKLIPLGKSLIKRVGEKIAILNFGALLQNAYLAAEKLNATLIDMRFVKPLDTNMILKLSLKYNFLVTIEEGVIAGGAGSAVNEFIMMRKILLPVLNIGLPDMFIAHGSQEEIKHDYQLDPEGIQNKILAWLSY.

Thiamine diphosphate contacts are provided by residues His-80 and 121 to 123 (GHS). A Mg(2+)-binding site is contributed by Asp-152. Residues 153–154 (GS), Asn-181, Tyr-259, and Glu-334 contribute to the thiamine diphosphate site. Residue Asn-181 coordinates Mg(2+).

It belongs to the transketolase family. DXPS subfamily. In terms of assembly, homodimer. It depends on Mg(2+) as a cofactor. The cofactor is thiamine diphosphate.

The catalysed reaction is D-glyceraldehyde 3-phosphate + pyruvate + H(+) = 1-deoxy-D-xylulose 5-phosphate + CO2. It functions in the pathway metabolic intermediate biosynthesis; 1-deoxy-D-xylulose 5-phosphate biosynthesis; 1-deoxy-D-xylulose 5-phosphate from D-glyceraldehyde 3-phosphate and pyruvate: step 1/1. Catalyzes the acyloin condensation reaction between C atoms 2 and 3 of pyruvate and glyceraldehyde 3-phosphate to yield 1-deoxy-D-xylulose-5-phosphate (DXP). The sequence is that of 1-deoxy-D-xylulose-5-phosphate synthase from Buchnera aphidicola subsp. Schizaphis graminum (strain Sg).